The chain runs to 151 residues: Meiotically up-regulated gene 114 protein (151 aa).

The protein localises to the cytoplasm. Has a role in meiosis. The polypeptide is Meiotically up-regulated gene 114 protein (mug114) (Schizosaccharomyces pombe (strain 972 / ATCC 24843) (Fission yeast)).